A 283-amino-acid chain; its full sequence is uncharacterized protein (283 aa).

Catalysis depends on tyrosine 55, which acts as the Proton donor.

The protein belongs to the aldo/keto reductase family.

It is found in the cytoplasm. It localises to the nucleus. This is an uncharacterized protein from Schizosaccharomyces pombe (strain 972 / ATCC 24843) (Fission yeast).